The sequence spans 360 residues: Peptide chain release factor 1 (360 aa).

The residue at position 237 (glutamine 237) is an N5-methylglutamine.

It belongs to the prokaryotic/mitochondrial release factor family. Post-translationally, methylated by PrmC. Methylation increases the termination efficiency of RF1.

The protein localises to the cytoplasm. In terms of biological role, peptide chain release factor 1 directs the termination of translation in response to the peptide chain termination codons UAG and UAA. The sequence is that of Peptide chain release factor 1 from Pseudomonas fluorescens (strain SBW25).